Consider the following 150-residue polypeptide: Macrodomain Ter protein (150 aa).

It belongs to the MatP family. As to quaternary structure, homodimer.

It localises to the cytoplasm. In terms of biological role, required for spatial organization of the terminus region of the chromosome (Ter macrodomain) during the cell cycle. Prevents early segregation of duplicated Ter macrodomains during cell division. Binds specifically to matS, which is a 13 bp signature motif repeated within the Ter macrodomain. This Escherichia coli O81 (strain ED1a) protein is Macrodomain Ter protein.